We begin with the raw amino-acid sequence, 356 residues long: MQPSTLQALAKRALATQHVSKDDYYILERCGLWWHEAPISIYIDNDNQIMIRTLCFKEGIKLNTALVLAVKENNEDLIMLFTEWGANINYGLLFINNEHTRNLCRKLGAKEELETSEILRFFFETKCKITSSNVILCHELFSNNPFLQNVNMVDLRMIIYWELKDLTTNSMLNEISFSEMLTKYWYGIAVKYNLKEAIQYFCQEYRHFDEWRLICALSFNNVFDLHEICNTTKVHMSINKMMELACMRDNNFLTIYYCFALGANANRAMLISVKNFCIENMFFCMDLGANVIEHSKTLADIYGYSIIVNILSLKIYKANPILLSKETNPEKINTLLKNYYSKNMLAYDIYCIDNYL.

The ANK repeat unit spans residues 61–93 (KLNTALVLAVKENNEDLIMLFTEWGANINYGLL).

This sequence belongs to the asfivirus MGF 360 family.

In terms of biological role, plays a role in virus cell tropism, and may be required for efficient virus replication in macrophages. In African swine fever virus (isolate Warthog/Namibia/Wart80/1980) (ASFV), this protein is Protein MGF 360-3L.